The chain runs to 169 residues: MLATRVFSLIGRRAISTSVCVRAHGSVVKSEDYALPSYVDRRDYPLPDVAHVKNLSASQKALKEKEKASWSSLSIDEKVELYRLKFKESFAEMNRSTNEWKTVVGAAMFFIGFTALLLIWEKHYVYGPIPHTFEEEWVAKQTKRMLDMKVAPIQGFSAKWDYDKNEWKK.

A mitochondrion-targeting transit peptide spans 1 to 22 (MLATRVFSLIGRRAISTSVCVR). The Mitochondrial matrix segment spans residues 23 to 98 (AHGSVVKSED…SFAEMNRSTN (76 aa)). Position 29 is an N6-acetyllysine; alternate (lysine 29). Lysine 29 carries the post-translational modification N6-succinyllysine; alternate. Lysine 53 bears the N6-acetyllysine mark. Serine 56 and serine 58 each carry phosphoserine. Lysine 60 bears the N6-acetyllysine; alternate mark. Lysine 60 bears the N6-succinyllysine; alternate mark. N6-acetyllysine is present on lysine 67. A helical membrane pass occupies residues 99–124 (EWKTVVGAAMFFIGFTALLLIWEKHY). At 125–169 (VYGPIPHTFEEEWVAKQTKRMLDMKVAPIQGFSAKWDYDKNEWKK) the chain is on the mitochondrial intermembrane side.

This sequence belongs to the cytochrome c oxidase IV family. As to quaternary structure, component of the cytochrome c oxidase (complex IV, CIV), a multisubunit enzyme composed of 14 subunits. The complex is composed of a catalytic core of 3 subunits MT-CO1, MT-CO2 and MT-CO3, encoded in the mitochondrial DNA, and 11 supernumerary subunits COX4I1 (or COX4I2), COX5A, COX5B, COX6A2 (or COX6A1), COX6B1 (or COX6B2), COX6C, COX7A1 (or COX7A2), COX7B, COX7C, COX8B and NDUFA4, which are encoded in the nuclear genome. The complex exists as a monomer or a dimer and forms supercomplexes (SCs) in the inner mitochondrial membrane with NADH-ubiquinone oxidoreductase (complex I, CI) and ubiquinol-cytochrome c oxidoreductase (cytochrome b-c1 complex, complex III, CIII), resulting in different assemblies (supercomplex SCI(1)III(2)IV(1) and megacomplex MCI(2)III(2)IV(2)). Interacts with PHB2; the interaction decreases in absence of SPHK2. Interacts with AFG1L. Interacts with ABCB7; this interaction allows the regulation of cellular iron homeostasis and cellular reactive oxygen species (ROS) levels in cardiomyocytes. Interacts with FLVCR2; this interaction occurs in the absence of heme and is disrupted upon heme binding. Interacts with IRGC.

It is found in the mitochondrion inner membrane. It participates in energy metabolism; oxidative phosphorylation. In terms of biological role, component of the cytochrome c oxidase, the last enzyme in the mitochondrial electron transport chain which drives oxidative phosphorylation. The respiratory chain contains 3 multisubunit complexes succinate dehydrogenase (complex II, CII), ubiquinol-cytochrome c oxidoreductase (cytochrome b-c1 complex, complex III, CIII) and cytochrome c oxidase (complex IV, CIV), that cooperate to transfer electrons derived from NADH and succinate to molecular oxygen, creating an electrochemical gradient over the inner membrane that drives transmembrane transport and the ATP synthase. Cytochrome c oxidase is the component of the respiratory chain that catalyzes the reduction of oxygen to water. Electrons originating from reduced cytochrome c in the intermembrane space (IMS) are transferred via the dinuclear copper A center (CU(A)) of subunit 2 and heme A of subunit 1 to the active site in subunit 1, a binuclear center (BNC) formed by heme A3 and copper B (CU(B)). The BNC reduces molecular oxygen to 2 water molecules using 4 electrons from cytochrome c in the IMS and 4 protons from the mitochondrial matrix. This chain is Cytochrome c oxidase subunit 4 isoform 1, mitochondrial (COX4I1), found in Bos taurus (Bovine).